The chain runs to 217 residues: C-type lectin domain family 2 member I (217 aa).

Residues 1 to 53 (MPDCLETGEKLFVHNMNAQCVQKPEEGNGPLGTGGKIVQGKCFRIISTVSPVK) lie on the Cytoplasmic side of the membrane. The chain crosses the membrane as a helical; Signal-anchor for type II membrane protein span at residues 54-74 (LYCCYGVIMVLTVAVIALSVA). Residues 75 to 217 (LSTKKTEQII…YNLHCQTPPV (143 aa)) lie on the Extracellular side of the membrane. A disulfide bridge connects residues Cys-92 and Cys-103. The region spanning 99–203 (VGNKCFYFSG…SYINRMWICS (105 aa)) is the C-type lectin domain. N-linked (GlcNAc...) asparagine glycosylation is present at Asn-112. Cys-120 and Cys-202 are joined by a disulfide.

In terms of tissue distribution, detected in osteoblasts, growth plate chondrocytes and skeletal muscle overlying the bone (at protein level). Detected in spleen, B-cells, dendritic cells, thymus, and in IL2-activated natural killer cells.

The protein resides in the cell membrane. Its function is as follows. Inhibits osteoclast formation. Receptor for KLRB1F. Enhances T-cell activation. Plays a role in splenocyte activation, T-cell responses and IL-2 production. This Mus musculus (Mouse) protein is C-type lectin domain family 2 member I (Clec2i).